Consider the following 544-residue polypeptide: Cannabidiolic acid synthase (544 aa).

The signal sequence occupies residues 1–28; that stretch reads MKCSTFSFWFVCKIIFFFFSFNIQTSIA. Cys37 and Cys99 are disulfide-bonded. Asn45 and Asn65 each carry an N-linked (GlcNAc...) asparagine glycan. The 175-residue stretch at 77–251 folds into the FAD-binding PCMH-type domain; that stretch reads TTPKPLVIVT…VAWKIRLVAV (175 aa). Residues 109-115 and Ser120 each bind FAD; that span reads TRSGGHD. The 6-(S-cysteinyl)-8alpha-(pros-histidyl)-FAD (His-Cys) cross-link spans 114–176; that stretch reads HDSEGMSYIS…ENLSLAAGYC (63 aa). N-linked (GlcNAc...) asparagine glycosylation occurs at Asn168. Residues Cys176, 180 to 184, Tyr190, Glu236, and Ile241 each bind FAD; that span reads CAGGH. His291 serves as a coordination point for cannabigerolate. N-linked (GlcNAc...) asparagine glycans are attached at residues Asn296, Asn304, and Asn328. Residues Tyr416 and Glu441 each coordinate cannabigerolate. Residue 480–482 coordinates FAD; that stretch reads YLN. The active-site Proton acceptor is Tyr483. N-linked (GlcNAc...) asparagine glycosylation is present at Asn498.

The protein belongs to the oxygen-dependent FAD-linked oxidoreductase family. Monomer. It depends on FAD as a cofactor. In terms of processing, glycosylated. The FAD cofactor is bound via a bicovalent 6-S-cysteinyl, 8alpha-N1-histidyl FAD linkage. Expressed in young leaves.

Its subcellular location is the secreted. The protein resides in the extracellular space. It localises to the apoplast. The catalysed reaction is cannabigerolate + O2 = cannabidiolate + H2O2. It functions in the pathway secondary metabolite biosynthesis; terpenoid biosynthesis. Its activity is regulated as follows. Inhibited by Hg(2+). Oxidoreductase involved in the biosynthesis of cannabinoids-related terpenophenolic natural products, which have pharmacological activity. Catalyzes the stereoselective oxidative cyclization of the monoterpene moiety in cannabigerolic acid (CBGA), producing cannabidiolate (CBDA), the major cannabioid in fiber-type Cannabis plants. Can also use cannabinerolic acid as substrate, but not cannabigerol or cannabinerol. The protein is Cannabidiolic acid synthase of Cannabis sativa (Hemp).